The primary structure comprises 523 residues: Sialate O-acetylesterase (523 aa).

The N-terminal stretch at 1 to 23 (MVAPGLVLGLVLPLILWADRSAG) is a signal peptide. Residues Asn107, Asn138, Asn267, Asn290, Asn401, and Asn422 are each glycosylated (N-linked (GlcNAc...) asparagine).

Widely expressed with high expression in the testis, prostate, and colon.

Its subcellular location is the lysosome. The protein resides in the cytoplasm. The enzyme catalyses N-acetyl-9-O-acetylneuraminate + H2O = N-acetylneuraminate + acetate + H(+). The catalysed reaction is an Ac-O-9-sialoglycoconjugate + H2O = a sialoglycoconjugate + acetate + H(+). Catalyzes the removal of O-acetyl ester groups from position 9 of the free diacetylated sialate N-acetyl-9-O-acetylneuraminate (Neu5,9Ac2) in the cytosol and of the diacetylated sialate residues of sialylglycoconjugates in the lysosomes. Together with the sialate-O-acetyltransferase they regulate the balance of acetylated sialoglycoconjugates, key players in various processes such as cell-cell interactions, host-pathogen recognition, and tumor antigenicity. This chain is Sialate O-acetylesterase (SIAE), found in Homo sapiens (Human).